Here is a 319-residue protein sequence, read N- to C-terminus: tRNA uridine(34) hydroxylase (319 aa).

Residues 124-218 form the Rhodanese domain; sequence LDEDTVILDA…YGKNEETKGE (95 aa). The active-site Cysteine persulfide intermediate is cysteine 178.

It belongs to the TrhO family.

The enzyme catalyses uridine(34) in tRNA + AH2 + O2 = 5-hydroxyuridine(34) in tRNA + A + H2O. Catalyzes oxygen-dependent 5-hydroxyuridine (ho5U) modification at position 34 in tRNAs. The sequence is that of tRNA uridine(34) hydroxylase from Listeria monocytogenes serotype 4b (strain CLIP80459).